The sequence spans 926 residues: Lipoxygenase 4, chloroplastic (926 aa).

Residues 1–58 (MALANEIMGSRLIFERSSSLASPFHSRFSIKKKTQRTQFSINPFDPRPMRAVNSSGVV) constitute a chloroplast transit peptide. In terms of domain architecture, PLAT spans 106–228 (FKETLVKHLD…DHPSKRILFT (123 aa)). Residues 231 to 926 (PYLPSETPSG…CRGVPNSVSI (696 aa)) enclose the Lipoxygenase domain. 5 residues coordinate Fe cation: histidine 585, histidine 590, histidine 777, asparagine 781, and isoleucine 926.

This sequence belongs to the lipoxygenase family. Requires Fe cation as cofactor. In terms of tissue distribution, expressed in leaves.

Its subcellular location is the plastid. It localises to the chloroplast. It carries out the reaction (9Z,12Z)-octadecadienoate + O2 = (13S)-hydroperoxy-(9Z,11E)-octadecadienoate. The enzyme catalyses (9Z,12Z,15Z)-octadecatrienoate + O2 = (13S)-hydroperoxy-(9Z,11E,15Z)-octadecatrienoate. Its pathway is lipid metabolism; oxylipin biosynthesis. Its function is as follows. Plant lipoxygenases may be involved in a number of diverse aspects of plant physiology including growth and development, pest resistance, and senescence or responses to wounding. Catalyzes the hydroperoxidation of lipids containing a cis,cis-1,4-pentadiene structure. 13S-lipoxygenase that can use linolenic acid as substrates. In Arabidopsis thaliana (Mouse-ear cress), this protein is Lipoxygenase 4, chloroplastic (LOX4).